Here is a 259-residue protein sequence, read N- to C-terminus: 14-3-3-like protein (259 aa).

This sequence belongs to the 14-3-3 family.

The chain is 14-3-3-like protein from Helianthus annuus (Common sunflower).